Here is a 22-residue protein sequence, read N- to C-terminus: Superoxide dismutase [Cu-Zn] (22 aa).

This sequence belongs to the Cu-Zn superoxide dismutase family. Homodimer. It depends on Cu cation as a cofactor. Requires Zn(2+) as cofactor.

It localises to the cytoplasm. It catalyses the reaction 2 superoxide + 2 H(+) = H2O2 + O2. Its function is as follows. Destroys radicals which are normally produced within the cells and which are toxic to biological systems. The chain is Superoxide dismutase [Cu-Zn] from Hordeum vulgare (Barley).